Reading from the N-terminus, the 179-residue chain is Large ribosomal subunit protein eL18 (179 aa).

The protein belongs to the eukaryotic ribosomal protein eL18 family. Component of the large ribosomal subunit.

Its subcellular location is the cytoplasm. It is found in the cytosol. The protein resides in the rough endoplasmic reticulum. Component of the large ribosomal subunit. The ribosome is a large ribonucleoprotein complex responsible for the synthesis of proteins in the cell. The chain is Large ribosomal subunit protein eL18 (rpl18) from Salmo salar (Atlantic salmon).